Here is a 393-residue protein sequence, read N- to C-terminus: NADH-quinone oxidoreductase subunit D (393 aa).

Belongs to the complex I 49 kDa subunit family. NDH-1 is composed of 14 different subunits. Subunits NuoB, C, D, E, F, and G constitute the peripheral sector of the complex.

The protein resides in the cell inner membrane. It carries out the reaction a quinone + NADH + 5 H(+)(in) = a quinol + NAD(+) + 4 H(+)(out). In terms of biological role, NDH-1 shuttles electrons from NADH, via FMN and iron-sulfur (Fe-S) centers, to quinones in the respiratory chain. The immediate electron acceptor for the enzyme in this species is believed to be ubiquinone. Couples the redox reaction to proton translocation (for every two electrons transferred, four hydrogen ions are translocated across the cytoplasmic membrane), and thus conserves the redox energy in a proton gradient. This chain is NADH-quinone oxidoreductase subunit D, found in Ehrlichia chaffeensis (strain ATCC CRL-10679 / Arkansas).